Here is a 169-residue protein sequence, read N- to C-terminus: Lachrymatory-factor synthase (169 aa).

A propeptide spanning residues 1–12 (MELNPGAPAVVA) is cleaved from the precursor. Residues E88 and Y102 each act as proton donor/acceptor in the active site.

The protein localises to the vacuole. It catalyses the reaction (E)-prop-1-en-1-SO-peroxol = (Z)-propanethial S-oxide. It carries out the reaction (E)-alk-1-en-1-SO-peroxol = (Z)-alkanethial oxide. In terms of biological role, produces lacrymatory factor (propanthial S-oxide) from 1-propenylsulphenic acid, an unstable compound resulting from the degradation of trans-1-propenyl-L-cysteine sulphoxide (PRENCSO) by alliinase. The polypeptide is Lachrymatory-factor synthase (Allium cepa (Onion)).